We begin with the raw amino-acid sequence, 82 residues long: RNA-binding protein Hfq (82 aa).

The 60-residue stretch at 9–68 (DPYLNTLRKERVPVSIYLVNGIKLQGQIESFDQFVILLKNTVSQMVYKTAISTVVPSRPV) folds into the Sm domain.

This sequence belongs to the Hfq family. As to quaternary structure, homohexamer.

In terms of biological role, RNA chaperone that binds small regulatory RNA (sRNAs) and mRNAs to facilitate mRNA translational regulation in response to envelope stress, environmental stress and changes in metabolite concentrations. Also binds with high specificity to tRNAs. In Pseudomonas aeruginosa, this protein is RNA-binding protein Hfq.